Here is a 102-residue protein sequence, read N- to C-terminus: Late embryogenesis abundant protein D-19 (102 aa).

The interval 1–102 (MASEQYQAMR…IDESKFRTKN (102 aa)) is disordered. Residues 48–58 (EGRHKGGETRK) are compositionally biased toward basic and acidic residues.

The protein belongs to the small hydrophilic plant seed protein family.

Functionally, LEA proteins are late embryonic proteins abundant in higher plant seed embryos. There are two subsets of LEA proteins (5a and 5b), the first ones are expressed when the cotyledon weight reach 80 mg and the second set are expressed above 100 mg. The function of those proteins is not known. The sequence is that of Late embryogenesis abundant protein D-19 from Gossypium hirsutum (Upland cotton).